We begin with the raw amino-acid sequence, 209 residues long: Small ribosomal subunit protein uS4 (209 aa).

Residues 22–45 form a disordered region; sequence RGRNPLLRKPNPPGQHGMQRKKKS. The S4 RNA-binding domain maps to 93 to 154; the sequence is CRLDNIVYRL…KSRRLAIVTE (62 aa).

Belongs to the universal ribosomal protein uS4 family. Part of the 30S ribosomal subunit. Contacts protein S5. The interaction surface between S4 and S5 is involved in control of translational fidelity.

In terms of biological role, one of the primary rRNA binding proteins, it binds directly to 16S rRNA where it nucleates assembly of the body of the 30S subunit. Its function is as follows. With S5 and S12 plays an important role in translational accuracy. This Chlamydia muridarum (strain MoPn / Nigg) protein is Small ribosomal subunit protein uS4.